The following is a 1370-amino-acid chain: Zinc finger MYM-type protein 3 (1370 aa).

Composition is skewed to low complexity over residues 1–12 (MDPSDFPSPFDP) and 52–61 (PSSGALDLLD). 2 disordered regions span residues 1–72 (MDPS…DPGV) and 90–301 (PSPP…QRAG). Residues 230-253 (ASEKPPERKRSERVRRAEPPKPEV) are compositionally biased toward basic and acidic residues. Ser263 and Ser267 each carry phosphoserine. Over residues 263 to 279 (SDEDSDAMVDDPNDEDF) the composition is skewed to acidic residues. Glycyl lysine isopeptide (Lys-Gly) (interchain with G-Cter in SUMO2) cross-links involve residues Lys308, Lys320, and Lys328. 9 consecutive MYM-type zinc fingers follow at residues 332 to 366 (QLFC…TKDS), 378 to 422 (HEFC…LHEV), 429 to 464 (HRLC…KTGS), 477 to 511 (KRFC…FEML), 521 to 559 (SLFC…PCYY), 567 to 604 (YQFC…KPEV), 612 to 646 (FQFC…HEKL), 653 to 692 (KSFC…GVTE), and 699 to 733 (WDFC…LETI). Ser464 bears the Phosphoserine mark. The span at 759–794 (NLDTQSGPESLLNSQSPESKPQTPSQTKVENSNTVR) shows a compositional bias: polar residues. Residues 759-830 (NLDTQSGPES…PPPPATPRKN (72 aa)) form a disordered region. Glycyl lysine isopeptide (Lys-Gly) (interchain with G-Cter in SUMO2) cross-links involve residues Lys778 and Lys786. A Phosphothreonine modification is found at Thr795. Residue Lys804 forms a Glycyl lysine isopeptide (Lys-Gly) (interchain with G-Cter in SUMO2) linkage. Over residues 815-826 (APTPPPPPPPAT) the composition is skewed to pro residues. Phosphothreonine is present on residues Thr817 and Thr826. Glycyl lysine isopeptide (Lys-Gly) (interchain with G-Cter in SUMO2) cross-links involve residues Lys847, Lys861, Lys920, and Lys1275.

As to quaternary structure, may be a component of a BHC histone deacetylase complex that contains HDAC1, HDAC2, HMG20B/BRAF35, KDM1A, RCOR1/CoREST, PHF21A/BHC80, ZMYM2, ZNF217, ZMYM3, GSE1 and GTF2I. Most abundant in brain, moderate in muscle and heart, low in other tissues except placenta.

It localises to the nucleus. Its function is as follows. Plays a role in the regulation of cell morphology and cytoskeletal organization. The chain is Zinc finger MYM-type protein 3 (ZMYM3) from Homo sapiens (Human).